The following is a 123-amino-acid chain: Small ribosomal subunit protein uS13 (123 aa).

The segment at glycine 95–lysine 123 is disordered.

The protein belongs to the universal ribosomal protein uS13 family. Part of the 30S ribosomal subunit. Forms a loose heterodimer with protein S19. Forms two bridges to the 50S subunit in the 70S ribosome.

Located at the top of the head of the 30S subunit, it contacts several helices of the 16S rRNA. In the 70S ribosome it contacts the 23S rRNA (bridge B1a) and protein L5 of the 50S subunit (bridge B1b), connecting the 2 subunits; these bridges are implicated in subunit movement. Contacts the tRNAs in the A and P-sites. This is Small ribosomal subunit protein uS13 from Clostridium acetobutylicum (strain ATCC 824 / DSM 792 / JCM 1419 / IAM 19013 / LMG 5710 / NBRC 13948 / NRRL B-527 / VKM B-1787 / 2291 / W).